We begin with the raw amino-acid sequence, 193 residues long: Bradykinin-potentiating and C-type natriuretic peptides (193 aa).

The N-terminal stretch at Met-1–Gly-23 is a signal peptide. Positions Lys-24–His-27 are excised as a propeptide. Positions Pro-25–Met-173 are disordered. Gln-28 is subject to Pyrrolidone carboxylic acid. 2 consecutive propeptides follow at residues Leu-40–Gln-43 and Leu-58–Ser-64. The residue at position 65 (Gln-65) is a Pyrrolidone carboxylic acid. Residues Val-75–Ala-169 constitute a propeptide that is removed on maturation. Residues Ser-95–Ser-123 show a composition bias toward low complexity. The span at Pro-125 to Ala-150 shows a compositional bias: basic and acidic residues. The span at Pro-152–Ala-162 shows a compositional bias: gly residues. Basic residues predominate over residues Arg-163–Met-173. Cys-177 and Cys-193 are joined by a disulfide.

In the N-terminal section; belongs to the bradykinin-potentiating peptide family. This sequence in the C-terminal section; belongs to the natriuretic peptide family. Expressed by the venom gland.

Its subcellular location is the secreted. In terms of biological role, bradykinin-potentiating peptide both inhibits the activity of the angiotensin-converting enzyme (ACE) and enhances the action of bradykinin by inhibiting the peptidases that inactivate it. It acts as an indirect hypotensive agent. Neither synthetic Tf1, nor synthetic Tf2 show bradykinin-potentiating effects. Its function is as follows. Has a vasorelaxant activity in rat aortic strips and a diuretic potency in anesthetized rats. Has a vasorelaxant activity in rat aortic strips and a diuretic potency in anesthetized rats. Is as potent as Tf-CNP. This Protobothrops flavoviridis (Habu) protein is Bradykinin-potentiating and C-type natriuretic peptides.